A 471-amino-acid polypeptide reads, in one-letter code: 3-isopropylmalate dehydratase large subunit (471 aa).

C347, C407, and C410 together coordinate [4Fe-4S] cluster.

Belongs to the aconitase/IPM isomerase family. LeuC type 1 subfamily. Heterodimer of LeuC and LeuD. [4Fe-4S] cluster is required as a cofactor.

The catalysed reaction is (2R,3S)-3-isopropylmalate = (2S)-2-isopropylmalate. It functions in the pathway amino-acid biosynthesis; L-leucine biosynthesis; L-leucine from 3-methyl-2-oxobutanoate: step 2/4. Functionally, catalyzes the isomerization between 2-isopropylmalate and 3-isopropylmalate, via the formation of 2-isopropylmaleate. This Geobacillus sp. (strain WCH70) protein is 3-isopropylmalate dehydratase large subunit.